The primary structure comprises 459 residues: Ribulose bisphosphate carboxylase large chain (459 aa).

Position 4 is an N6,N6,N6-trimethyllysine (Lys-4). Residues Asn-113 and Thr-163 each coordinate substrate. The Proton acceptor role is filled by Lys-165. Lys-167 serves as a coordination point for substrate. Lys-191, Asp-193, and Glu-194 together coordinate Mg(2+). N6-carboxylysine is present on Lys-191. The Proton acceptor role is filled by His-284. Arg-285, His-317, and Ser-369 together coordinate substrate.

The protein belongs to the RuBisCO large chain family. Type I subfamily. As to quaternary structure, heterohexadecamer of 8 large chains and 8 small chains; disulfide-linked. The disulfide link is formed within the large subunit homodimers. Requires Mg(2+) as cofactor. In terms of processing, the disulfide bond which can form in the large chain dimeric partners within the hexadecamer appears to be associated with oxidative stress and protein turnover.

It localises to the plastid. The protein localises to the chloroplast. It catalyses the reaction 2 (2R)-3-phosphoglycerate + 2 H(+) = D-ribulose 1,5-bisphosphate + CO2 + H2O. It carries out the reaction D-ribulose 1,5-bisphosphate + O2 = 2-phosphoglycolate + (2R)-3-phosphoglycerate + 2 H(+). In terms of biological role, ruBisCO catalyzes two reactions: the carboxylation of D-ribulose 1,5-bisphosphate, the primary event in carbon dioxide fixation, as well as the oxidative fragmentation of the pentose substrate in the photorespiration process. Both reactions occur simultaneously and in competition at the same active site. In Nyssa ogeche (Ogeechee tupelo), this protein is Ribulose bisphosphate carboxylase large chain.